Consider the following 825-residue polypeptide: AP-3 complex subunit delta (825 aa).

HEAT repeat units lie at residues 131–168 (GLAR…QYPE), 169–205 (AISA…RAPK), 207–243 (YLEF…YEPR), 244–281 (LVKK…LVGH), 285–323 (DKLA…THPS), 324–360 (LVSA…KENI), 363–400 (IVKT…KSTY), 469–513 (EKRT…LAHR), 515–547 (LLQA…LWVE), and 548–584 (KIVS…IVNT). The interval 787–825 (STNQGSMGDIVLETKSPIRVEKKKSKKKKKKKEKTSGKE) is disordered. The span at 807 to 819 (EKKKSKKKKKKKE) shows a compositional bias: basic residues.

Belongs to the adaptor complexes large subunit family. As to quaternary structure, adaptor protein complex 3 (AP-3) is a heterotetramer composed of 2 large adaptins (apl5 and apl6), a medium adaptin (apm3) and a small adaptin (aps3).

Its subcellular location is the golgi apparatus. The protein localises to the cytoplasmic vesicle. It is found in the clathrin-coated vesicle membrane. Its function is as follows. Part of the AP-3 complex, an adaptor-related complex which is not clathrin-associated. The complex is associated with the Golgi region as well as more peripheral structures. It facilitates the budding of vesicles from the Golgi membrane and may be directly involved in trafficking to the vacuole. The protein is AP-3 complex subunit delta (apl5) of Schizosaccharomyces pombe (strain 972 / ATCC 24843) (Fission yeast).